A 280-amino-acid polypeptide reads, in one-letter code: 2-dehydro-3-deoxyphosphooctonate aldolase (280 aa).

Belongs to the KdsA family.

The protein localises to the cytoplasm. It catalyses the reaction D-arabinose 5-phosphate + phosphoenolpyruvate + H2O = 3-deoxy-alpha-D-manno-2-octulosonate-8-phosphate + phosphate. Its pathway is carbohydrate biosynthesis; 3-deoxy-D-manno-octulosonate biosynthesis; 3-deoxy-D-manno-octulosonate from D-ribulose 5-phosphate: step 2/3. It participates in bacterial outer membrane biogenesis; lipopolysaccharide biosynthesis. In Rhizobium meliloti (strain 1021) (Ensifer meliloti), this protein is 2-dehydro-3-deoxyphosphooctonate aldolase.